A 183-amino-acid polypeptide reads, in one-letter code: MNKLIPLPREFFARDTNVVSTELIGKTLYFQGKTAIITETESYIGQNDPACHAARGRTKRTDIMFGPAGFSYVYLIYGMYYCLNFVTEAKGFPAATLIRGVHVISPENLYLNGPGKLCKYLGINISHNKCDLINNNAFFVGDIGLKLPYSTTARIGITKGTDKLWRYVVTDITNLISQYNVQP.

Belongs to the DNA glycosylase MPG family.

In Rickettsia peacockii (strain Rustic), this protein is Putative 3-methyladenine DNA glycosylase.